Reading from the N-terminus, the 167-residue chain is I-Kappa-B like protein I1 (167 aa).

ANK repeat units follow at residues 54 to 86 (HGKQ…DING), 91 to 121 (FGNT…NMGI), and 125 to 154 (LFKT…QCRI).

This sequence belongs to the polydnaviridae I-Kappa-B-like protein family.

In terms of biological role, suppresses the host immune response through NF-kappa-B inactivation. Possesses ankyrin repeat domains required for NF-kappa-B binding but lacks the regulatory regions required for dissociation from NF-kappa-B and degradation. Therefore, prevents host NF-kappa-B release and subsequent activation. The chain is I-Kappa-B like protein I1 (I1) from Microplitis demolitor (Parasitoid wasp).